Here is a 178-residue protein sequence, read N- to C-terminus: Protein modigliani (178 aa).

As to quaternary structure, probably homodimerizes. Component of the MTV complex, composed of moi/modigliani, tea and ver/verrocchio. Interacts with ver/verrochio and tea (via C-terminus); the interactions are direct and require fully intact moi/modigliani and ver/verrocchio. The MTV complex is recruited to telomeres by the HipHop-HOAP complex, consisting of HipHop, cav/HOAP and Su(var)205/HP1 to form the terminin telomere-capping complex. Interacts with cav/HOAP and Su(var)205/HP1; the interactions are direct. Probably interacts with peo (via N-terminus and UBC domain).

It localises to the nucleus. The protein localises to the chromosome. The protein resides in the telomere. Part of the MTV complex that associates with the HipHop-HOAP complex to form the terminin telomere-capping complex involved in telomere maintenance and prevention of telomere fusion. Potentially functions downstream of mei-41/ATR. As part of the MTV complex binds single stranded DNA in a sequence-independent manner, protecting it from degradation. The protein is Protein modigliani of Drosophila melanogaster (Fruit fly).